The following is a 298-amino-acid chain: UDP-N-acetylenolpyruvoylglucosamine reductase (298 aa).

Residues 26-191 (KTGGAADVFV…LDATFSLALE (166 aa)) enclose the FAD-binding PCMH-type domain. R170 is a catalytic residue. S220 acts as the Proton donor in catalysis. E290 is a catalytic residue.

This sequence belongs to the MurB family. The cofactor is FAD.

It is found in the cytoplasm. The catalysed reaction is UDP-N-acetyl-alpha-D-muramate + NADP(+) = UDP-N-acetyl-3-O-(1-carboxyvinyl)-alpha-D-glucosamine + NADPH + H(+). Its pathway is cell wall biogenesis; peptidoglycan biosynthesis. Functionally, cell wall formation. In Listeria monocytogenes serotype 4b (strain CLIP80459), this protein is UDP-N-acetylenolpyruvoylglucosamine reductase.